A 339-amino-acid chain; its full sequence is 2-halobenzoate 1,2-dioxygenase electron transfer component (339 aa).

Residues 3 to 96 (HSIALRFEDD…DCVVRILASS (94 aa)) form the 2Fe-2S ferredoxin-type domain. 4 residues coordinate [2Fe-2S] cluster: Cys40, Cys45, Cys48, and Cys80. The segment at 98–336 (ACQVKKSTMT…NFYFEKFAPT (239 aa)) is ferredoxin-reductase. An FAD-binding FR-type domain is found at 103–203 (KSTMTGQMTE…DGPYGAFYLR (101 aa)).

It belongs to the bacterial ring-hydroxylating dioxygenase ferredoxin reductase family. In terms of assembly, monomer. It is part of 2-halobenzoate dioxygenase two component enzyme system. The other component is a dioxygenase component consisting of 3 large (CbdA) subunits and 3 small (CbdB) subunits. FAD serves as cofactor. The cofactor is [2Fe-2S] cluster.

The enzyme catalyses 2 reduced [2Fe-2S]-[ferredoxin] + NAD(+) + H(+) = 2 oxidized [2Fe-2S]-[ferredoxin] + NADH. It participates in xenobiotic degradation; benzoate degradation via CoA ligation. Electron transfer component of 2-halobenzoate 1,2-dioxygenase system. The sequence is that of 2-halobenzoate 1,2-dioxygenase electron transfer component (cbdC) from Burkholderia cepacia (Pseudomonas cepacia).